A 391-amino-acid polypeptide reads, in one-letter code: Somatostatin receptor type 1 (391 aa).

The disordered stretch occupies residues 1 to 50 (MFPNGTASSPSSSPSPSPGSCGEGACSRGPGSGAADGMEEPGRNASQNGT). The Extracellular segment spans residues 1 to 56 (MFPNGTASSPSSSPSPSPGSCGEGACSRGPGSGAADGMEEPGRNASQNGTLSEGQG). Residue N4 is glycosylated (N-linked (GlcNAc...) asparagine). A compositionally biased stretch (low complexity) spans 8–20 (SSPSSSPSPSPGS). N-linked (GlcNAc...) asparagine glycosylation is found at N44 and N48. A helical membrane pass occupies residues 57 to 84 (SAILISFIYSVVCLVGLCGNSMVIYVIL). Topologically, residues 85 to 94 (RYAKMKTATN) are cytoplasmic. Residues 95 to 120 (IYILNLAIADELLMLSVPFLVTSTLL) form a helical membrane-spanning segment. Over 121–131 (RHWPFGALLCR) the chain is Extracellular. C130 and C208 are joined by a disulfide. The chain crosses the membrane as a helical span at residues 132–153 (LVLSVDAVNMFTSIYCLTVLSV). The Cytoplasmic portion of the chain corresponds to 154-175 (DRYVAVVHPIKAARYRRPTVAK). A helical membrane pass occupies residues 176–196 (VVNLGVWVLSLLVILPIVVFS). The Extracellular segment spans residues 197–219 (RTAANSDGTVACNMLMPEPAQRW). A helical transmembrane segment spans residues 220–244 (LVGFVLYTFLMGFLLPVGAICLCYV). The Cytoplasmic portion of the chain corresponds to 245-270 (LIIAKMRMVALKAGWQQRKRSERKIT). The chain crosses the membrane as a helical span at residues 271–296 (LMVMMVVMVFVICWMPFYVVQLVNVF). The Extracellular segment spans residues 297-303 (AEQDDAT). Residues 304–327 (VSQLSVILGYANSCANPILYGFLS) traverse the membrane as a helical segment. Over 328-391 (DNFKRSFQRI…GTCASRISTL (64 aa)) the chain is Cytoplasmic. A lipid anchor (S-palmitoyl cysteine) is attached at C339.

Belongs to the G-protein coupled receptor 1 family. In terms of tissue distribution, jejunum and stomach.

It is found in the cell membrane. Receptor for somatostatin with higher affinity for somatostatin-14 than -28. This receptor is coupled via pertussis toxin sensitive G proteins to inhibition of adenylyl cyclase. In addition it stimulates phosphotyrosine phosphatase and Na(+)/H(+) exchanger via pertussis toxin insensitive G proteins. The sequence is that of Somatostatin receptor type 1 (Sstr1) from Mus musculus (Mouse).